Consider the following 158-residue polypeptide: Small ribosomal subunit protein uS7 (158 aa).

The protein belongs to the universal ribosomal protein uS7 family. As to quaternary structure, part of the 30S ribosomal subunit. Contacts proteins S9 and S11.

Its function is as follows. One of the primary rRNA binding proteins, it binds directly to 16S rRNA where it nucleates assembly of the head domain of the 30S subunit. Is located at the subunit interface close to the decoding center, probably blocks exit of the E-site tRNA. The protein is Small ribosomal subunit protein uS7 of Porphyromonas gingivalis (strain ATCC BAA-308 / W83).